The primary structure comprises 936 residues: Probable outer membrane protein pmp7 (936 aa).

A signal peptide spans 1–23 (MKSSVSWLFFSSIPLFSSLSIVA). The Autotransporter domain occupies 636–936 (GEPFERELWL…NTNLGSKFCF (301 aa)).

It belongs to the PMP outer membrane protein family.

The protein localises to the secreted. It is found in the cell wall. It localises to the cell outer membrane. This is Probable outer membrane protein pmp7 (pmp7) from Chlamydia pneumoniae (Chlamydophila pneumoniae).